Reading from the N-terminus, the 206-residue chain is Guanylyl cyclase inhibitory protein (206 aa).

Glycine 2 is lipidated: N-myristoyl glycine. EF-hand domains are found at residues 31–49 (SGLI…VTVG), 51–86 (NSSE…LAHG), 87–122 (TPED…VYKM), and 135–170 (TAEE…DEWV). 8 residues coordinate Ca(2+): aspartate 64, asparagine 66, aspartate 68, glutamate 75, aspartate 100, aspartate 102, aspartate 104, and glutamate 111.

In terms of tissue distribution, retina; inner segments, somata and synaptic terminals of cone receptors.

Does not stimulate guanylyl cyclase (GC) when free calcium ion concentration is low, but inhibits GC when free calcium ions concentration is elevated. The polypeptide is Guanylyl cyclase inhibitory protein (GCIP) (Lithobates pipiens (Northern leopard frog)).